Consider the following 559-residue polypeptide: Polypeptide N-acetylgalactosaminyltransferase 1 (559 aa).

The Cytoplasmic segment spans residues 1-8; it reads MRKFAYCK. A helical; Signal-anchor for type II membrane protein transmembrane segment spans residues 9 to 28; sequence VVLATSLVWVLLDMFLLLYF. The Lumenal portion of the chain corresponds to 29-559; sequence SECNKCEEKK…LRNVTLPEIF (531 aa). Asn-95 is a glycosylation site (N-linked (GlcNAc...) asparagine). 5 cysteine pairs are disulfide-bonded: Cys-106–Cys-339, Cys-330–Cys-408, Cys-442–Cys-459, Cys-482–Cys-497, and Cys-523–Cys-540. The tract at residues 115–225 is catalytic subdomain A; sequence LPTTSVVIVF…VGWLEPLLAR (111 aa). Substrate-binding residues include Asp-156 and Arg-186. Mn(2+) is bound by residues Asp-209 and His-211. The interval 285 to 347 is catalytic subdomain B; it reads PVRTPTMAGG…TCSHVGHVFR (63 aa). Position 316 (Trp-316) interacts with substrate. His-344 is a Mn(2+) binding site. Substrate-binding residues include Arg-347 and Tyr-352. In terms of domain architecture, Ricin B-type lectin spans 429–551; the sequence is FSLGEIRNVE…GSRSQQWLLR (123 aa). Asn-552 carries N-linked (GlcNAc...) asparagine glycosylation.

This sequence belongs to the glycosyltransferase 2 family. GalNAc-T subfamily. It depends on Mn(2+) as a cofactor. In terms of tissue distribution, heart, brain, spleen, liver, skeletal muscle and kidney.

Its subcellular location is the golgi apparatus. It localises to the golgi stack membrane. It is found in the secreted. The catalysed reaction is L-seryl-[protein] + UDP-N-acetyl-alpha-D-galactosamine = a 3-O-[N-acetyl-alpha-D-galactosaminyl]-L-seryl-[protein] + UDP + H(+). It carries out the reaction L-threonyl-[protein] + UDP-N-acetyl-alpha-D-galactosamine = a 3-O-[N-acetyl-alpha-D-galactosaminyl]-L-threonyl-[protein] + UDP + H(+). The protein operates within protein modification; protein glycosylation. Functionally, catalyzes the initial reaction in O-linked oligosaccharide biosynthesis, the transfer of an N-acetyl-D-galactosamine residue to a serine or threonine residue on the protein receptor. Has a broad spectrum of substrates such as apomucin-, MUC5AC-, MUC1- and MUC2-derived peptides. The chain is Polypeptide N-acetylgalactosaminyltransferase 1 from Rattus norvegicus (Rat).